A 1515-amino-acid chain; its full sequence is MSRNDQEPFLVKFLKSSDNSECFFKALESIKELQSEDYLQIITDEEALKIRENDKSLYICDRFSGTVFDHLKQLGCRIVGPQVVTFCMRHQQCVPRAEHPVYNMIMSDVTVSCTSLDKDKREEVHKYVQMMGGRVYRDLNVSVTHLIAGEVGSKKYLVAANLKKPILLPSWIKTLWEKSQEKKITKYTDVNMEDFKCPIFLGCIICVTGLNGIHRKTVQQLTAKHGGQYMGQLKMNECTHLIVQEPKGQKYECARRWNVHCVTLQWFHDSIEKGFCQDESIYKAETRVEAKMVPDTSTPTAQSNAESHTLADVSHISNINGSCVNETMFGSTTSKLECSLENLENLDISMFQAPEDLLDGCRIYLCGFSGRKLDKLRRLINSGGGVRFNQLNEDVTHVIVGDYDDDVRQFWSKSSHRPHVVGAKWLLECFTKGYILPEESYIHTNYQPAGIAVSDQPGNQTAVLDKSGSFSKSALVPAERLQQADEDLLAQYGNDDSTMVEAKLSEALEPEVGPCPGSAHREPCDDSTHISVQEENKSSVSHCILDDSTVREEGLFSQKSFLVLGFSVENKCNIVDIIREHAGKIVSLPSRIVADYAVVPLLGCEVDVTVGEVVTNTWLVTCIDNQTLVDPKSNPLFTPVSVMSGVTPLEDCVISFSQCVGAERDSLVFLANHLGASVQEFFVRKANAKKGMLASTHLIVKEPTGSKYEAAKKWSLPAVNISWLLETARIGKRADENHFLVDNAPKQEQVLETKIPNGVSSNPDLPAHPDAHLEIHRKKAVTPLDMNRFQSRAFRAVISQQRGQDPTFPPVRQPLTKEPSLHLDTPSKFLSKDKLFKPSFDVTDALAALETPNAASQKRKLSSPLSEVIVRNLTVALANSSRNTDSHSASPQLKGAHLEEEETRKPLDSVVVCVSKKLSKKQSELNGVAASLGAEYRWSFDETVTHFIYQGRANDSNREYKSAKERGVHIVSEHWLLECAQEYKHLPESLYPHTYNPKMSLDINTVQDGRLCNSRAPLAVSASKDDGPDHLSVEGNETNTMGTNDKESPLLNGSGRDDCKGALTQALEMRENFQKQLQEIMSATCIVKTPAQKTCMSRSSCNSASSTPDSARSVRSGRSRVLEALRQSRQAVPDVNTEPSQNEQIIWDDPTAREERARLASNLQWPSDPTQHSELQVEIKMPDDSPSRKPVYHSEIAEQASCVTQAPGHPGSEEPEPPVAERPLIPEPQAPAVASPLAKPPVAPQPADKIETQEETHRKVKKQYVFQMSSLNSQERIDYCRLIKDLGGSVIEKQCSDPSCTHMVVGYPLRNEKYLASMAAGKWVLHRSYLDACKTAGRFVQEEDYEWGSSSILDALPDVTEHQQKLALAAMRWRKRIQQSQESGIVEGAFSGWKAILRVDRPREAGFKRLLQAGGAKVLSGHPEPLLKDATHLFCDFNKLKPDDCRVFIAEATAQNMVCLKTEYIADYLMLESPPCADNYRVSEAALFHNKKGGPGLPQKRKTPAENVVKRPRVH.

2 BRCT domains span residues 101 to 189 and 195 to 284; these read VYNM…KYTD and FKCP…IYKA. Phosphothreonine is present on Thr298. BRCT domains lie at 353 to 443, 551 to 636, and 644 to 741; these read APED…SYIH, REEG…SNPL, and SGVT…HFLV. Residues 759-893 form an interaction with CIP2A region; the sequence is VSSNPDLPAH…TDSHSASPQL (135 aa). Phosphothreonine is present on Thr782. Residues 799 to 826 are disordered; that stretch reads SQQRGQDPTFPPVRQPLTKEPSLHLDTP. Residue Thr851 is modified to Phosphothreonine. 5 positions are modified to phosphoserine: Ser862, Ser863, Ser866, Ser888, and Ser890. Positions 880–891 are enriched in polar residues; it reads SSRNTDSHSASP. The tract at residues 880-901 is disordered; it reads SSRNTDSHSASPQLKGAHLEEE. Residues 902-993 form the BRCT 6 domain; sequence ETRKPLDSVV…KHLPESLYPH (92 aa). Positions 1020 to 1055 are disordered; the sequence is VSASKDDGPDHLSVEGNETNTMGTNDKESPLLNGSG. Over residues 1023-1032 the composition is skewed to basic and acidic residues; it reads SKDDGPDHLS. Thr1064 carries the post-translational modification Phosphothreonine. Positions 1097–1116 are enriched in low complexity; it reads SRSSCNSASSTPDSARSVRS. 3 disordered regions span residues 1097 to 1119, 1203 to 1255, and 1491 to 1515; these read SRSS…SGRS, VTQA…TQEE, and KKGG…PRVH. Residues 1217–1229 show a composition bias toward pro residues; sequence PPVAERPLIPEPQ. A BRCT 7 domain is found at 1255-1347; sequence ETHRKVKKQY…RFVQEEDYEW (93 aa). The Nuclear localization signal motif lies at 1510 to 1513; sequence KRPR.

The protein belongs to the TOPBP1 family. As to quaternary structure, interacts (via BRCT domains 1 and 2) with (phosphorylated) MDC1; promoting TOPBP1 recruitment to DNA damage sites during mitosis. Interacts (via BRCT domains 7 and 8) with (autophosphorylated) ATR; promoting activation of ATR. Interacts (via BRCT domains 7 and 8) with (phosphorylated) POLQ; specifically binds POLQ phosphorylated by PLK1, promoting POLQ recruitment to DNA damage sites. Interacts (via BRCT domains 1 and 2) with (phosphorylated) RAD9A. Interacts (via BRCT domain 2) with (phosphorylated) TP53BP1. Interacts (via BRCT domain 2) with (phosphorylated) HTATSF1. Interacts (via BRCT domains 7 and 8) with (phosphorylated) RAD51; promoting RAD51 recruitment to damaged chromatin. Interacts with CIP2A; forming the CIP2A-TOPBP1 complex. Interacts with POLE. Interacts with UBR5. Interacts with E2F1. Interacts with PML. Interacts with SMARCA2. Interacts with SMARCA4. Interacts with RHNO1. May interact with TOP2B. Interacts with TICRR. Interacts with HELB. Post-translationally, phosphorylated on serine and threonine residues in response to X-ray irradiation. In terms of processing, ubiquitinated and degraded by the proteasome. X-ray irradiation reduces ubiquitination. Deubiquitinated by USP13; leading to TOPBP1 stabilizion and activation of the ATR-TOPBP1 axis pathway. As to expression, highly expressed in testis.

Its subcellular location is the nucleus. It is found in the chromosome. The protein localises to the cytoplasm. The protein resides in the cytoskeleton. It localises to the microtubule organizing center. Its subcellular location is the centrosome. It is found in the spindle pole. Scaffold protein that acts as a key protein-protein adapter in DNA replication and DNA repair. Composed of multiple BRCT domains, which specifically recognize and bind phosphorylated proteins, bringing proteins together into functional combinations. Required for DNA replication initiation but not for the formation of pre-replicative complexes or the elongation stages. Necessary for the loading of replication factors onto chromatin, including GMNC, CDC45, DNA polymerases and components of the GINS complex. Plays a central role in DNA repair by bridging proteins and promoting recruitment of proteins to DNA damage sites. Involved in double-strand break (DSB) repair via homologous recombination in S-phase by promoting the exchange between the DNA replication factor A (RPA) complex and RAD51. Mechanistically, TOPBP1 is recruited to DNA damage sites in S-phase via interaction with phosphorylated HTATSF1, and promotes the loading of RAD51, thereby facilitating RAD51 nucleofilaments formation and RPA displacement, followed by homologous recombination. Involved in microhomology-mediated end-joining (MMEJ) DNA repair by promoting recruitment of polymerase theta (POLQ) to DNA damage sites during mitosis. MMEJ is an alternative non-homologous end-joining (NHEJ) machinery that takes place during mitosis to repair DSBs in DNA that originate in S-phase. Recognizes and binds POLQ phosphorylated by PLK1, enabling its recruitment to DSBs for subsequent repair. Involved in G1 DNA damage checkpoint by acting as a molecular adapter that couples TP53BP1 and the 9-1-1 complex. In response to DNA damage, triggers the recruitment of checkpoint signaling proteins on chromatin, which activate the CHEK1 signaling pathway and block S-phase progression. Acts as an activator of the kinase activity of ATR. Also required for chromosomal stability when DSBs occur during mitosis by forming filamentous assemblies that bridge MDC1 and tether broken chromosomes during mitosis. Together with CIP2A, plays an essential role in the response to genome instability generated by the presence of acentric chromosome fragments derived from shattered chromosomes within micronuclei. Micronuclei, which are frequently found in cancer cells, consist of chromatin surrounded by their own nuclear membrane: following breakdown of the micronuclear envelope, a process associated with chromothripsis, the CIP2A-TOPBP1 complex tethers chromosome fragments during mitosis to ensure clustered segregation of the fragments to a single daughter cell nucleus, facilitating re-ligation with limited chromosome scattering and loss. Recruits the SWI/SNF chromatin remodeling complex to E2F1-responsive promoters, thereby down-regulating E2F1 activity and inhibiting E2F1-dependent apoptosis during G1/S transition and after DNA damage. In Mus musculus (Mouse), this protein is DNA topoisomerase 2-binding protein 1.